Reading from the N-terminus, the 192-residue chain is MSLYVVISPTGRTDGNIPARGYAGPSGRLDVIARAYNAILEPNATLAALLMGGPLPPRLLIAPLSCKDIVRSERSFMIEASRALRGRRSCFTVNDEGVEALASLLRRFKPRILLAEKGGDISSHWGEMCSSSPTFIAGSHLDPPHGLIKHLERSLGGFLRVSVGPLSLHTDHVFLLVSALRLPMHATSIEHH.

S-adenosyl-L-methionine-binding residues include Leu-114 and Gly-138.

It belongs to the methyltransferase superfamily. TrmY family. In terms of assembly, homodimer.

The protein resides in the cytoplasm. It carries out the reaction pseudouridine(54) in tRNA + S-adenosyl-L-methionine = N(1)-methylpseudouridine(54) in tRNA + S-adenosyl-L-homocysteine + H(+). Specifically catalyzes the N1-methylation of pseudouridine at position 54 (Psi54) in tRNAs. This chain is tRNA (pseudouridine(54)-N(1))-methyltransferase, found in Aeropyrum pernix (strain ATCC 700893 / DSM 11879 / JCM 9820 / NBRC 100138 / K1).